The following is a 1151-amino-acid chain: MSAPDYMQCAEDHQTLLVVVQPVGVIKNENFFKIYNRVSSVCQVNPMNTQRLLSIRYRHQYPVDNNEWGDFQTHRKVVGLICIAECTSARDLPHTILKFEQQKEAYSSTLYDSRLFLFGFQGEMADQSRIDVASYPSYDNCAAVDKRVEDFIQSLFIVLESKRLDRTSEKSGEKIPLLYVPYEKKDFVGLDPDSRHYKKRCQGRMRKHVGDLCLQAGMLQDALVHYHMAVELLRAVNDFVWLGAALEGLCSASVIHHYPGGTGGKAGTQLRQSVTMSADSFKRHRPGAQEVLIDPGALSTNGINMDASTEIGRAKNCLSPDDIIEKYKEAISYYGKSKAAGVIELEACVKAVRVLAIQKKSMDASEFLQNVVYINLRQLSEEEKIQRYSVLSELYELIGFHRKSAFFKRVAAMQCVAPSIVEPGWKACYKLLLETLPGYSLSLDPKDFSKGTHKGWAAVQMRLLHELVYASRRMGNPALAVRHLSFLLQTMLDFLSDQEKKDVAQSLESYTSKCPGTMDPITLPEGLVLPPVPFTKLPIVRSVKLLDLPVILRPQKVKNLLGQKLSTKSPFIYSPIIAHNRSEEKNKKIDFQWVQGDVCEVQLMVYNPMPFELRVETMGLLTSGVEFEYLPAALSLPAESGLYPVTLVGVPRTTGQITVNGYHTSVCGVYSDCLLDNLPGLKNNGCTVEVIPALPRLQISTSLPRSAHVLQPSSGDEVSTHVSVQLYNGETQKVIIKLENIGAEPLEKLEVTSKTVNTKEKFYGDFLSWDLEPTLSQFPLKPGNTATLTVYIKVKLDFSCQENLLQDLSDDGISVSGLQISSPFRHVSKPRVETKPVNQSDSKSSDFSHVKTLEGILNFKYSGGPGHVEGYYRNLSLGLHVDVEPSVFFTRVSTLPATSTRQCHLLFDVFNSTEHELTINAKDNQELILHAGECQRMAIQVDKFNFEGISDAPSEKQNYHNMKEIEEERQHSKGLEINSKLGIRWKIPTLKREGEASVEGVLNQLVLEHLQLAPLQWDVLVDGKPCDCDAIADCKVGDPIHLEVRLTNCSKNAVGPFALTVIPYQDYQNGVHNHELQDIVTFVGSNTFYIGAVQPMDRSVCFGALLFLYTGDFYLDIKFQDDNSNRELPLSWFCLPSVHIRAIDTLNETKF.

Belongs to the NIBP family. Part of the multisubunit TRAPP (transport protein particle) complex.

It localises to the golgi apparatus. The protein resides in the cis-Golgi network. Its subcellular location is the endoplasmic reticulum. It is found in the cytoplasm. Its function is as follows. Functions as an activator of NF-kappa-B through increased phosphorylation of the IKK complex. May function in neuronal cells differentiation. May play a role in vesicular transport from endoplasmic reticulum to Golgi. The sequence is that of Trafficking protein particle complex subunit 9 (trappc9) from Xenopus laevis (African clawed frog).